We begin with the raw amino-acid sequence, 105 residues long: Large ribosomal subunit protein uL24 (105 aa).

The protein belongs to the universal ribosomal protein uL24 family. Part of the 50S ribosomal subunit.

Functionally, one of two assembly initiator proteins, it binds directly to the 5'-end of the 23S rRNA, where it nucleates assembly of the 50S subunit. Its function is as follows. One of the proteins that surrounds the polypeptide exit tunnel on the outside of the subunit. The sequence is that of Large ribosomal subunit protein uL24 from Staphylococcus carnosus (strain TM300).